The chain runs to 335 residues: Nuclear distribution protein nudE homolog 1 (335 aa).

Residues 1–93 (MEDSGKTFSS…VQHSEGYRQI (93 aa)) form a self-association region. Residues 18–188 (WKDLAMTYKQ…ELAVQQKQEK (171 aa)) adopt a coiled-coil conformation. Residues 88 to 156 (EGYRQISALE…ERNAFLESEL (69 aa)) are interaction with PAFAH1B1. The interval 167-290 (QRLKDEARDL…QSPNRTGGPA (124 aa)) is interaction with CENPF. The tract at residues 181–246 (AVQQKQEKPR…DDSTGGTPLT (66 aa)) is disordered. Polar residues predominate over residues 204 to 214 (TAVQATGSVPS). The residue at position 211 (Ser211) is a Phosphoserine. Phosphothreonine is present on residues Thr215 and Thr228. 2 positions are modified to phosphoserine: Ser231 and Ser239. 2 positions are modified to phosphothreonine: Thr243 and Thr246. The S-palmitoyl cysteine; by ZDHHC2, ZDHHC3 and ZDHHC7 moiety is linked to residue Cys274. The segment at 279-335 (YDQSPNRTGGPASGRSSKNRDGGERRPSSTSVPLGDKGLDTSCRWLSKSTTRSSSSC) is disordered. A Phosphoserine modification is found at Ser282. A compositionally biased stretch (basic and acidic residues) spans 296–305 (KNRDGGERRP). The residue at position 309 (Ser309) is a Phosphoserine. Positions 325–335 (SKSTTRSSSSC) are enriched in low complexity.

It belongs to the nudE family. In terms of assembly, homodimer. Interacts with CNTRL, LIS1, dynein, SLMAP and TCP1. Interacts with CENPF, dynactin, tubulin gamma, PAFAH1B1, PCM1 and PCNT. Interacts with ZNF365. Interacts with GTP-bound RAB9A and RAB9B; the interaction leads to RAB9-dynein motor tethering. Interacts (via C-terminus) with MCRS1 (via C-terminus); phosphorylation of NDE1 inhibits the interaction. Post-translationally, phosphorylated in mitosis. Phosphorylated in vitro by CDC2. Phosphorylation at Thr-246 is essential for the G2/M transition. As to expression, expressed in the neuroepithelium throughout the developing brain, including the cerebral cortex and cerebellum.

It is found in the cytoplasm. Its subcellular location is the cytoskeleton. The protein localises to the microtubule organizing center. It localises to the centrosome. The protein resides in the chromosome. It is found in the centromere. Its subcellular location is the kinetochore. The protein localises to the spindle. It localises to the cleavage furrow. The protein resides in the cytoplasmic vesicle membrane. Its function is as follows. Required for centrosome duplication and formation and function of the mitotic spindle. Essential for the development of the cerebral cortex. May regulate the production of neurons by controlling the orientation of the mitotic spindle during division of cortical neuronal progenitors of the proliferative ventricular zone of the brain. Orientation of the division plane perpendicular to the layers of the cortex gives rise to two proliferative neuronal progenitors whereas parallel orientation of the division plane yields one proliferative neuronal progenitor and a postmitotic neuron. A premature shift towards a neuronal fate within the progenitor population may result in an overall reduction in the final number of neurons and an increase in the number of neurons in the deeper layers of the cortex. Acts as a RAB9A/B effector that tethers RAB9-associated late endosomes to the dynein motor for their retrograde transport to the trans-Golgi network. The protein is Nuclear distribution protein nudE homolog 1 of Homo sapiens (Human).